The chain runs to 394 residues: Probable ribosome production factor 1 (394 aa).

2 disordered regions span residues 1 to 98 (MIKI…PVLN) and 116 to 152 (MKKE…EKDQ). 2 stretches are compositionally biased toward acidic residues: residues 15–33 (QDSD…DLEV) and 59–88 (ASED…DDDD). The span at 116–134 (MKKEKHKKKMQERRARRKA) shows a compositional bias: basic residues. In terms of domain architecture, Brix spans 185-369 (PKVLITFADN…LRSLQEGTFD (185 aa)). Residues 347–364 (VKLRELGPRFTLKLRSLQ) form an RNA-binding region.

Its subcellular location is the nucleus. The protein localises to the nucleolus. In terms of biological role, may be required for ribosome biogenesis. The sequence is that of Probable ribosome production factor 1 from Drosophila melanogaster (Fruit fly).